The chain runs to 452 residues: Protein CLT3, chloroplastic (452 aa).

The N-terminal 34 residues, 1–34 (MATTSRRFTTGLFASITSVKSHSANRPQSISLIR), are a transit peptide targeting the chloroplast. The next 10 helical transmembrane spans lie at 105–125 (AEIV…RVMY), 137–157 (FFLA…ILYF), 175–195 (PFLI…AAAA), 202–222 (TTVL…IFLG), 230–250 (ILGC…GSGA), 258–278 (GVLW…GTVL), 307–327 (FQAI…GIPF), 353–373 (GAPF…IALL), 389–409 (TVSV…LGVA), and 412–432 (LPKG…LYSW).

It belongs to the CRT-like transporter family.

The protein localises to the plastid. It localises to the chloroplast membrane. Functionally, involved in thiol transport from the plastid to the cytosol. Transports probably both glutathione (GSH) and its precursor, gamma-glutamylcysteine (gamma-EC). Exhibits some functional redundancy with CLT1 in maintaining the root GSH pool. The protein is Protein CLT3, chloroplastic of Arabidopsis thaliana (Mouse-ear cress).